A 164-amino-acid polypeptide reads, in one-letter code: Phosphopantetheine adenylyltransferase (164 aa).

A substrate-binding site is contributed by Ser10. Residues 10-11 (SF) and His18 each bind ATP. Residues Lys42, Leu74, and Arg88 each contribute to the substrate site. Residues 89–91 (GLR), Glu99, and 124–130 (YSFLSSS) contribute to the ATP site.

This sequence belongs to the bacterial CoaD family. In terms of assembly, homohexamer. Mg(2+) serves as cofactor.

The protein localises to the cytoplasm. It carries out the reaction (R)-4'-phosphopantetheine + ATP + H(+) = 3'-dephospho-CoA + diphosphate. It functions in the pathway cofactor biosynthesis; coenzyme A biosynthesis; CoA from (R)-pantothenate: step 4/5. Functionally, reversibly transfers an adenylyl group from ATP to 4'-phosphopantetheine, yielding dephospho-CoA (dPCoA) and pyrophosphate. This chain is Phosphopantetheine adenylyltransferase, found in Bacillus licheniformis (strain ATCC 14580 / DSM 13 / JCM 2505 / CCUG 7422 / NBRC 12200 / NCIMB 9375 / NCTC 10341 / NRRL NRS-1264 / Gibson 46).